The sequence spans 224 residues: UPF0758 protein Neut_0782 (224 aa).

Positions 102-224 (IMDSPQSVRS…TVSFAERGLI (123 aa)) constitute an MPN domain. Zn(2+)-binding residues include H173, H175, and D186. The short motif at 173–186 (HNHPSGVAEPSRAD) is the JAMM motif element.

Belongs to the UPF0758 family.

This chain is UPF0758 protein Neut_0782, found in Nitrosomonas eutropha (strain DSM 101675 / C91 / Nm57).